A 327-amino-acid chain; its full sequence is Annexin A8 (327 aa).

Annexin repeat units lie at residues 21–92, 93–164, 177–249, and 253–324; these read FNPV…ALMY, PPYR…CLLQ, GLAL…TIVK, and NLHC…SLVG. Residues Met266, Gly268, Gly270, and Asp310 each coordinate Ca(2+).

The protein belongs to the annexin family.

Its function is as follows. This protein is an anticoagulant protein that acts as an indirect inhibitor of the thromboplastin-specific complex, which is involved in the blood coagulation cascade. The protein is Annexin A8 (ANXA8) of Oryctolagus cuniculus (Rabbit).